A 248-amino-acid polypeptide reads, in one-letter code: MDIVVDSHTHTIASGHAYSTILENALAAKNKGLKLLCTTDHAPEMPGAPHYWHFNNQRILPRFLHEVGILRGVEANTLNVKGEIDLPLSSDQHLDWVIASFHEPVFRPATEAEHTAALINVIKSGRVDVLGHLGNPNYPFDMEQVLRCAKSHNVAIEVNNTSLTGKSRKGSDARCDQIVALGKEIGVYFSTGSDAHFCEEISKLDLAIELLEKHGVEKDKILTTSTRRFLKFLLLRGKPRIPEFDAFY.

Positions 8, 10, 16, 41, 74, 102, 132, 194, and 196 each coordinate Zn(2+).

This sequence belongs to the PHP family. It depends on Zn(2+) as a cofactor.

The polypeptide is Probable phosphatase VPA0505 (Vibrio parahaemolyticus serotype O3:K6 (strain RIMD 2210633)).